The primary structure comprises 105 residues: Large ribosomal subunit protein uL24 (105 aa).

This sequence belongs to the universal ribosomal protein uL24 family. Part of the 50S ribosomal subunit.

One of two assembly initiator proteins, it binds directly to the 5'-end of the 23S rRNA, where it nucleates assembly of the 50S subunit. In terms of biological role, one of the proteins that surrounds the polypeptide exit tunnel on the outside of the subunit. The chain is Large ribosomal subunit protein uL24 from Xanthomonas oryzae pv. oryzae (strain MAFF 311018).